Here is a 635-residue protein sequence, read N- to C-terminus: 1-deoxy-D-xylulose-5-phosphate synthase (635 aa).

Thiamine diphosphate contacts are provided by residues His72 and 113–115 (GHA). Residue Asp144 coordinates Mg(2+). Thiamine diphosphate contacts are provided by residues 145–146 (GA), Asn174, Tyr287, and Glu370. Asn174 provides a ligand contact to Mg(2+).

The protein belongs to the transketolase family. DXPS subfamily. Homodimer. The cofactor is Mg(2+). It depends on thiamine diphosphate as a cofactor.

It catalyses the reaction D-glyceraldehyde 3-phosphate + pyruvate + H(+) = 1-deoxy-D-xylulose 5-phosphate + CO2. It functions in the pathway metabolic intermediate biosynthesis; 1-deoxy-D-xylulose 5-phosphate biosynthesis; 1-deoxy-D-xylulose 5-phosphate from D-glyceraldehyde 3-phosphate and pyruvate: step 1/1. Its function is as follows. Catalyzes the acyloin condensation reaction between C atoms 2 and 3 of pyruvate and glyceraldehyde 3-phosphate to yield 1-deoxy-D-xylulose-5-phosphate (DXP). This is 1-deoxy-D-xylulose-5-phosphate synthase from Trichodesmium erythraeum (strain IMS101).